The chain runs to 216 residues: Peptide methionine sulfoxide reductase MsrA (216 aa).

The active site involves Cys-54.

This sequence belongs to the MsrA Met sulfoxide reductase family.

The enzyme catalyses L-methionyl-[protein] + [thioredoxin]-disulfide + H2O = L-methionyl-(S)-S-oxide-[protein] + [thioredoxin]-dithiol. It carries out the reaction [thioredoxin]-disulfide + L-methionine + H2O = L-methionine (S)-S-oxide + [thioredoxin]-dithiol. Has an important function as a repair enzyme for proteins that have been inactivated by oxidation. Catalyzes the reversible oxidation-reduction of methionine sulfoxide in proteins to methionine. This Xanthomonas campestris pv. campestris (strain 8004) protein is Peptide methionine sulfoxide reductase MsrA.